A 206-amino-acid chain; its full sequence is Uridine kinase (206 aa).

9 to 16 (GGSGSGKT) is a binding site for ATP.

Belongs to the uridine kinase family.

It localises to the cytoplasm. The enzyme catalyses uridine + ATP = UMP + ADP + H(+). It catalyses the reaction cytidine + ATP = CMP + ADP + H(+). It functions in the pathway pyrimidine metabolism; CTP biosynthesis via salvage pathway; CTP from cytidine: step 1/3. Its pathway is pyrimidine metabolism; UMP biosynthesis via salvage pathway; UMP from uridine: step 1/1. This Borrelia turicatae (strain 91E135) protein is Uridine kinase.